The sequence spans 479 residues: Zinc finger and SCAN domain-containing protein 26 (479 aa).

A Glycyl lysine isopeptide (Lys-Gly) (interchain with G-Cter in SUMO2) cross-link involves residue K17. The region spanning 51–133 is the SCAN box domain; sequence CKRFRQLRYE…VFLEDLQLEL (83 aa). The segment at 155–187 is disordered; it reads TAPGKATPERQVQPEGDVPQPEREKGEAKRIEN. Basic and acidic residues predominate over residues 174–187; it reads QPEREKGEAKRIEN. The C2H2-type 1; degenerate zinc-finger motif lies at 232–254; it reads CKCSEYGQAFFQHSDLIKHESSH. C2H2-type zinc fingers lie at residues 283–305, 311–333, 339–361, 367–389, 395–417, 423–445, and 451–473; these read HQCH…QKIH, YQCK…LRIH, YLCI…QRIH, CQCK…QRIH, HQCN…HRIH, FKCT…VRIH, and YKCN…QRYH.

The protein localises to the nucleus. In terms of biological role, may be involved in transcriptional regulation. The sequence is that of Zinc finger and SCAN domain-containing protein 26 (ZSCAN26) from Bos taurus (Bovine).